A 273-amino-acid chain; its full sequence is Putative esterase/lipase 3 (273 aa).

Histidine 34 is a catalytic residue. Residue serine 100 is the Charge relay system of the active site.

The protein belongs to the lipase/esterase LIP3/BchO family.

The chain is Putative esterase/lipase 3 from Mycoplasma genitalium (strain ATCC 33530 / DSM 19775 / NCTC 10195 / G37) (Mycoplasmoides genitalium).